We begin with the raw amino-acid sequence, 29 residues long: Kunitz-type serine protease inhibitor RsTIQ7 (29 aa).

One can recognise a BPTI/Kunitz inhibitor domain in the interval 6–26 (QCVPTADPGPCKAYIPMWWYN).

Its function is as follows. Serine protease inhibitor. Inhibits trypsin, elastase, plasmin and kallikrein. This is Kunitz-type serine protease inhibitor RsTIQ7 from Rhipicephalus sanguineus (Brown dog tick).